We begin with the raw amino-acid sequence, 477 residues long: Alkaline phosphatase (477 aa).

Residue Asp44 coordinates Mg(2+). A Zn(2+)-binding site is contributed by Asp44. Ser94 functions as the Phosphoserine intermediate in the catalytic mechanism. An N-linked (GlcNAc...) asparagine glycan is attached at Asn124. His155 and Thr157 together coordinate Mg(2+). A disulfide bridge links Cys165 with Cys185. N-linked (GlcNAc...) asparagine glycosylation occurs at Asn214. Residue Glu315 coordinates Mg(2+). Zn(2+) is bound by residues Asp320, His324, Asp361, and His362. Asn413 carries an N-linked (GlcNAc...) asparagine glycan. Residue His437 coordinates Zn(2+).

As to quaternary structure, homodimer. Mg(2+) is required as a cofactor. It depends on Zn(2+) as a cofactor.

It is found in the cell membrane. It carries out the reaction a phosphate monoester + H2O = an alcohol + phosphate. The sequence is that of Alkaline phosphatase from Gadus morhua (Atlantic cod).